The chain runs to 467 residues: MDISLDQLWDEALCHLQVQLSRPTFEAWIKTARAESLVDNRLTICTPSEWARGWLQKHYASTITEVVQRVAGIPLQVEFSVSPHASVEAEPPSRAISPTSGRAGSLPASTTLGLEVGGSLPMRAPDLNPKYSFSRFVVGPNNRMAHAAALAVADKPGRAYNPLFLCGGVGLGKTHLMQAIGHYQLEANPQAKVFYVSTERFTNDLIDAIRRDSMQSFREHYRDVDILLVDDVQFIEGKEYTQEEFFHTFNTLHESGKQIVLAADRSPHLIPRLQERLCSRFSMGLIAEIQSPDIETRMAILKKKAEYEGMNLPADVIEYIATTYTSNIRELEGALIRAVAYVSISGLPMSVETIQPILNPPSEPKEITADMITDVVCEEFGIDRDSLLGSSRKRDISQARQIAMFLMRHYTNLSLPKIGDYFGGKDHTTVLYSCEKVSQLQRQSLQFERQLQKLVERLRVVANSRSS.

Residues 1–84 (MDISLDQLWD…LQVEFSVSPH (84 aa)) are domain I, interacts with DnaA modulators. The tract at residues 84–125 (HASVEAEPPSRAISPTSGRAGSLPASTTLGLEVGGSLPMRAP) is domain II. Positions 89–108 (AEPPSRAISPTSGRAGSLPA) are disordered. Positions 96-108 (ISPTSGRAGSLPA) are enriched in polar residues. The segment at 126 to 342 (DLNPKYSFSR…GALIRAVAYV (217 aa)) is domain III, AAA+ region. Gly170, Gly172, Lys173, and Thr174 together coordinate ATP. Residues 343–467 (SISGLPMSVE…LRVVANSRSS (125 aa)) form a domain IV, binds dsDNA region.

Belongs to the DnaA family. In terms of assembly, oligomerizes as a right-handed, spiral filament on DNA at oriC.

Its subcellular location is the cytoplasm. In terms of biological role, plays an essential role in the initiation and regulation of chromosomal replication. ATP-DnaA binds to the origin of replication (oriC) to initiate formation of the DNA replication initiation complex once per cell cycle. Binds the DnaA box (a 9 base pair repeat at the origin) and separates the double-stranded (ds)DNA. Forms a right-handed helical filament on oriC DNA; dsDNA binds to the exterior of the filament while single-stranded (ss)DNA is stabiized in the filament's interior. The ATP-DnaA-oriC complex binds and stabilizes one strand of the AT-rich DNA unwinding element (DUE), permitting loading of DNA polymerase. After initiation quickly degrades to an ADP-DnaA complex that is not apt for DNA replication. Binds acidic phospholipids. The sequence is that of Chromosomal replication initiator protein DnaA from Synechococcus sp. (strain JA-2-3B'a(2-13)) (Cyanobacteria bacterium Yellowstone B-Prime).